Here is a 345-residue protein sequence, read N- to C-terminus: Myb/SANT-like DNA-binding domain-containing protein 4 (345 aa).

In terms of domain architecture, Myb-like spans 4–77 (LKRKRKSNFS…EVKRRYLDWR (74 aa)). Residue K9 forms a Glycyl lysine isopeptide (Lys-Gly) (interchain with G-Cter in SUMO2) linkage. S106 is modified (phosphoserine). Residues K114 and K142 each participate in a glycyl lysine isopeptide (Lys-Gly) (interchain with G-Cter in SUMO2) cross-link. A disordered region spans residues 141-160 (VKVEEEERDPQSPEFEIEEE). T188 bears the Phosphothreonine mark. Residues 203-345 (LLVNIEKQKL…LRIQKEGHLQ (143 aa)) adopt a coiled-coil conformation. Residues K237, K254, and K273 each participate in a glycyl lysine isopeptide (Lys-Gly) (interchain with G-Cter in SUMO2) cross-link.

The sequence is that of Myb/SANT-like DNA-binding domain-containing protein 4 (MSANTD4) from Bos taurus (Bovine).